The primary structure comprises 106 residues: Thioredoxin (106 aa).

Residues 2–106 (VQVISNLDEF…LESLVQKSLA (105 aa)) enclose the Thioredoxin domain. Catalysis depends on nucleophile residues C30 and C33. Residues C30 and C33 are joined by a disulfide bond.

Belongs to the thioredoxin family.

Participates in various redox reactions through the reversible oxidation of its active center dithiol to a disulfide and catalyzes dithiol-disulfide exchange reactions. This is Thioredoxin from Coprinus comatus (Shaggy mane).